We begin with the raw amino-acid sequence, 223 residues long: Pyridoxine/pyridoxamine 5'-phosphate oxidase (223 aa).

Substrate is bound by residues 9 to 12 and lysine 76; that span reads RVGY. FMN-binding positions include 71 to 76, 86 to 87, lysine 93, and glutamine 115; these read RTVLCK and FT. Substrate contacts are provided by tyrosine 133, arginine 137, and serine 141. Residues 150–151 and tryptophan 196 contribute to the FMN site; that span reads QS. Position 202–204 (202–204) interacts with substrate; it reads RMH. Arginine 206 is an FMN binding site.

The protein belongs to the pyridoxamine 5'-phosphate oxidase family. As to quaternary structure, homodimer. It depends on FMN as a cofactor.

The catalysed reaction is pyridoxamine 5'-phosphate + O2 + H2O = pyridoxal 5'-phosphate + H2O2 + NH4(+). It carries out the reaction pyridoxine 5'-phosphate + O2 = pyridoxal 5'-phosphate + H2O2. It participates in cofactor metabolism; pyridoxal 5'-phosphate salvage; pyridoxal 5'-phosphate from pyridoxamine 5'-phosphate: step 1/1. The protein operates within cofactor metabolism; pyridoxal 5'-phosphate salvage; pyridoxal 5'-phosphate from pyridoxine 5'-phosphate: step 1/1. Its function is as follows. Catalyzes the oxidation of either pyridoxine 5'-phosphate (PNP) or pyridoxamine 5'-phosphate (PMP) into pyridoxal 5'-phosphate (PLP). The chain is Pyridoxine/pyridoxamine 5'-phosphate oxidase from Rhodococcus jostii (strain RHA1).